A 269-amino-acid polypeptide reads, in one-letter code: Cytochrome c oxidase subunit 3 (269 aa).

The next 7 helical transmembrane spans lie at 24–44 (FYNS…MHGF), 46–66 (NMYI…TLWF), 90–110 (GVGL…WTFF), 132–152 (IDPF…GVTV), 167–187 (ALYG…FQGI), 207–227 (FSTG…SVGL), and 247–267 (ILYW…IYFW).

It belongs to the cytochrome c oxidase subunit 3 family. As to quaternary structure, component of the cytochrome c oxidase (complex IV, CIV), a multisubunit enzyme composed of a catalytic core of 3 subunits and several supernumerary subunits. The complex exists as a monomer or a dimer and forms supercomplexes (SCs) in the inner mitochondrial membrane with ubiquinol-cytochrome c oxidoreductase (cytochrome b-c1 complex, complex III, CIII).

The protein localises to the mitochondrion inner membrane. It carries out the reaction 4 Fe(II)-[cytochrome c] + O2 + 8 H(+)(in) = 4 Fe(III)-[cytochrome c] + 2 H2O + 4 H(+)(out). Component of the cytochrome c oxidase, the last enzyme in the mitochondrial electron transport chain which drives oxidative phosphorylation. The respiratory chain contains 3 multisubunit complexes succinate dehydrogenase (complex II, CII), ubiquinol-cytochrome c oxidoreductase (cytochrome b-c1 complex, complex III, CIII) and cytochrome c oxidase (complex IV, CIV), that cooperate to transfer electrons derived from NADH and succinate to molecular oxygen, creating an electrochemical gradient over the inner membrane that drives transmembrane transport and the ATP synthase. Cytochrome c oxidase is the component of the respiratory chain that catalyzes the reduction of oxygen to water. Electrons originating from reduced cytochrome c in the intermembrane space (IMS) are transferred via the dinuclear copper A center (CU(A)) of subunit 2 and heme A of subunit 1 to the active site in subunit 1, a binuclear center (BNC) formed by heme A3 and copper B (CU(B)). The BNC reduces molecular oxygen to 2 water molecules using 4 electrons from cytochrome c in the IMS and 4 protons from the mitochondrial matrix. The sequence is that of Cytochrome c oxidase subunit 3 (COXIII) from Trichophyton rubrum (Athlete's foot fungus).